Here is a 95-residue protein sequence, read N- to C-terminus: Opiscorpine-3 (95 aa).

The first 19 residues, 1-19, serve as a signal peptide directing secretion; the sequence is MNNKLTALIFLGLLAIASC. Residues 55–95 enclose the BetaSPN-type CS-alpha/beta domain; the sequence is EFMCVANVDMTKSCDTHCQKASGEKGYCHGTKCKCGVPLSY. Intrachain disulfides connect C58/C82, C68/C87, and C72/C89.

This sequence belongs to the long chain scorpion toxin family. Class 3 subfamily. Expressed by the venom gland.

Its subcellular location is the secreted. In terms of biological role, has antimicrobial activity against yeasts and bacteria. The chain is Opiscorpine-3 from Opistophthalmus carinatus (African yellow leg scorpion).